The primary structure comprises 399 residues: Sphingosine-1-phosphate phosphatase 2 (399 aa).

4 helical membrane-spanning segments follow: residues 88–108 (YLFQ…FLPF), 121–141 (LIII…VLKW), 160–180 (YGMP…LLIS), and 185–205 (YQYP…LVCL). Residues 136–144 (KDVLKWPRP) form a phosphatase sequence motif I region. A phosphatase sequence motif II region spans residues 163 to 166 (PSTH). The active-site Proton donor is H166. A phosphatase sequence motif III region spans residues 206-217 (SRLYTGMHTVLD). The Nucleophile role is filled by H213. 5 helical membrane-spanning segments follow: residues 219–239 (LGGV…WTFI), 247–267 (PLFP…YPVS), 280–300 (ILAA…FQLV), 318–338 (TYML…ILLV), and 371–391 (VPYK…FVPM).

Belongs to the type 2 lipid phosphate phosphatase family. In terms of tissue distribution, expressed strongly in kidney and heart, followed by brain, colon, small intestine and lung. Not detected in skeletal muscle, thymus, spleen, liver, placenta, and peripheral blood leukocytes.

The protein localises to the endoplasmic reticulum membrane. The catalysed reaction is sphinganine 1-phosphate + H2O = sphinganine + phosphate. The enzyme catalyses sphing-4-enine 1-phosphate + H2O = sphing-4-enine + phosphate. It carries out the reaction (4R)-hydroxysphinganine 1-phosphate + H2O = (4R)-hydroxysphinganine + phosphate. In terms of biological role, has specific phosphohydrolase activity towards sphingoid base 1-phosphates. Has high phosphohydrolase activity against dihydrosphingosine-1-phosphate and sphingosine-1-phosphate (S1P) in vitro. Sphingosine-1-phosphate phosphatase activity is needed for efficient recycling of sphingosine into the sphingolipid synthesis pathway. May play a role in attenuating intracellular sphingosine 1-phosphate (S1P) signaling. May play a role in pro-inflammatory signaling. Plays a role in the regulation of pancreatic islet beta-cell endoplasmic reticulum stress and proliferation. In Homo sapiens (Human), this protein is Sphingosine-1-phosphate phosphatase 2.